A 257-amino-acid polypeptide reads, in one-letter code: General L-amino acid transport ATP-binding protein AapP (257 aa).

One can recognise an ABC transporter domain in the interval 18–252 (VEIVNMNKWY…PQHERTKLFL (235 aa)). ATP is bound at residue 50 to 57 (GPSGSGKS).

This sequence belongs to the ABC transporter superfamily.

Part of a binding-protein-dependent transport system for L-amino acids, affects the uptake as well as the efflux of these amino acids. Probably responsible for energy coupling to the transport system. This is General L-amino acid transport ATP-binding protein AapP (aapP) from Rhizobium johnstonii (strain DSM 114642 / LMG 32736 / 3841) (Rhizobium leguminosarum bv. viciae).